The sequence spans 164 residues: Nucleotide-binding protein Emin_0136 (164 aa).

It belongs to the YajQ family.

Nucleotide-binding protein. In Elusimicrobium minutum (strain Pei191), this protein is Nucleotide-binding protein Emin_0136.